The following is a 551-amino-acid chain: Tripartite motif-containing protein 5 (551 aa).

The residue at position 2 (Ala-2) is an N-acetylalanine. An RING-type zinc finger spans residues 15–55 (CPICLELLTEPLSLDCGHSFCQACITANHKESRERSCPLCR). Phosphoserine is present on Ser-82. The B box-type zinc-finger motif lies at 87-128 (QKVDRCARHGEKLLLFCQQHGNVICWLCERSEEHRGHRTSLV). Cys-92, His-95, Cys-114, and His-120 together coordinate Zn(2+). Residues 127–221 (LVEEVAQKYR…VQSENDMVLQ (95 aa)) adopt a coiled-coil conformation. The interval 182–195 (FKQLRDILDCEESN) is required for interaction with GABARAP and for autophagy. Residues 276–551 (PDLKGMLQVF…LPMTLCSPSS (276 aa)) form the B30.2/SPRY domain.

It belongs to the TRIM/RBCC family. Can form homodimers and homotrimers. In addition to lower-order dimerization, also exhibits a higher-order multimerization and both low- and high-order multimerizations are essential for its restriction activity. Interacts with BTBD1 and BTBD2. Interacts with PSMC4, PSMC5, PSMD7 and HSPA8/HSC70. Interacts (via B30.2/SPRY domain) with HSPA1A/B. Interacts with PSMC2, MAP3K7/TAK1, TAB2 and TAB3. Interacts with SQSTM1. Interacts with TRIM6 and TRIM34. Interacts with ULK1 (phosphorylated form), GABARAP, GABARAPL1, GABARAPL2, MAP1LC3A, MAP1LC3C and BECN1. Post-translationally, degraded in a proteasome-independent fashion in the absence of viral infection but in a proteasome-dependent fashion following exposure to restriction sensitive virus. Autoubiquitinated in a RING finger- and UBE2D2-dependent manner. Monoubiquitinated by TRIM21. Deubiquitinated by Yersinia YopJ. Ubiquitination may not lead to proteasomal degradation.

The protein resides in the cytoplasm. The protein localises to the nucleus. It catalyses the reaction S-ubiquitinyl-[E2 ubiquitin-conjugating enzyme]-L-cysteine + [acceptor protein]-L-lysine = [E2 ubiquitin-conjugating enzyme]-L-cysteine + N(6)-ubiquitinyl-[acceptor protein]-L-lysine.. It functions in the pathway protein modification; protein ubiquitination. In terms of biological role, capsid-specific restriction factor that prevents infection from non-host-adapted retroviruses. Blocks viral replication early in the life cycle, after viral entry but before reverse transcription. In addition to acting as a capsid-specific restriction factor, also acts as a pattern recognition receptor that activates innate immune signaling in response to the retroviral capsid lattice. Binding to the viral capsid triggers its E3 ubiquitin ligase activity, and in concert with the heterodimeric ubiquitin conjugating enzyme complex UBE2V1-UBE2N (also known as UBC13-UEV1A complex) generates 'Lys-63'-linked polyubiquitin chains, which in turn are catalysts in the autophosphorylation of the MAP3K7/TAK1 complex (includes TAK1, TAB2, and TAB3). Activation of the MAP3K7/TAK1 complex by autophosphorylation results in the induction and expression of NF-kappa-B and MAPK-responsive inflammatory genes, thereby leading to an innate immune response in the infected cell. Plays a role in regulating autophagy through activation of autophagy regulator BECN1 by causing its dissociation from its inhibitors BCL2 and TAB2. This chain is Tripartite motif-containing protein 5 (TRIM5), found in Alouatta sara (Bolivian red howler monkey).